The chain runs to 238 residues: tRNA (guanine-N(1)-)-methyltransferase (238 aa).

Residues Gly-110 and 129–134 (LGDFIL) each bind S-adenosyl-L-methionine.

This sequence belongs to the RNA methyltransferase TrmD family. Homodimer.

Its subcellular location is the cytoplasm. It catalyses the reaction guanosine(37) in tRNA + S-adenosyl-L-methionine = N(1)-methylguanosine(37) in tRNA + S-adenosyl-L-homocysteine + H(+). In terms of biological role, specifically methylates guanosine-37 in various tRNAs. The polypeptide is tRNA (guanine-N(1)-)-methyltransferase (Clostridium botulinum (strain Eklund 17B / Type B)).